The primary structure comprises 1302 residues: Neuroglian (1302 aa).

The N-terminal stretch at 1–23 is a signal peptide; the sequence is MWRQSTILAALLVALLCAGSAES. The Extracellular segment spans residues 24 to 1138; it reads KGNRPPRITK…ANAGWFIGMM (1115 aa). 6 Ig-like C2-type domains span residues 29–133, 134–225, 245–330, 339–426, 432–524, and 521–610; these read PRIT…AELN, AFKD…YKIG, PPVR…QSFS, PYFT…VYLN, PTIS…TRIT, and TRIT…ANLI. 4 cysteine pairs are disulfide-bonded: C59/C111, C155/C212, C268/C317, and C360/C410. N182 and N198 each carry an N-linked (GlcNAc...) asparagine glycan. 2 N-linked (GlcNAc...) asparagine glycosylation sites follow: N411 and N448. Fibronectin type-III domains follow at residues 614–711, 716–813, 818–915, 916–1017, and 1021–1119; these read VPNA…TQPD, NPDN…SGED, APTN…TPEG, VPSP…LKDA, and APAT…TVEG. C625 and C706 are oxidised to a cystine. N652 and N683 each carry an N-linked (GlcNAc...) asparagine glycan. N821 carries an N-linked (GlcNAc...) asparagine glycan. An N-linked (GlcNAc...) asparagine glycan is attached at N1125. Residues 1139-1154 traverse the membrane as a helical segment; the sequence is LALAFIIILFIIICII. Residues 1155 to 1302 lie on the Cytoplasmic side of the membrane; sequence RRNRGGKYDV…AAAGAVATYV (148 aa). The span at 1172–1182 shows a compositional bias: basic and acidic residues; it reads GRRDYPEEGGF. Disordered stretches follow at residues 1172–1223 and 1236–1291; these read GRRD…GDTG and VPGK…ASNG. Over residues 1188 to 1203 the composition is skewed to polar residues; that stretch reads PLDNKSAGRQSVSSAN. Over residues 1253 to 1275 the composition is skewed to low complexity; the sequence is AAAHQAAPTAGGSGAAGSAAAAG.

Forms a complex with Nrx-IV/Nrx and Cont. Forms a complex composed of septate junction proteins Nrx-IV/Nrx, Tsf2/MTf, Cont and Nrg during late embryogenesis. In terms of tissue distribution, restricted to the surface of neurons and glia in the developing nervous system. As to expression, restricted to non-neuronal tissues.

The protein localises to the cell membrane. It localises to the cell junction. It is found in the septate junction. Essential for septate junctions. Septate junctions, which are the equivalent of vertebrate tight junctions, are characterized by regular arrays of transverse structures that span the intermembrane space and form a physical barrier to diffusion. Required for formation of the hemolymph-brain barrier (the insect blood-brain barrier). Vital for embryonic development. Involved in the targeting for degradation or recycling of certain septate junction components, including kune and bou/boudin, by regulating their endocytosis. Functionally, may play a role in neural and glial cell adhesion in the developing embryo. In terms of biological role, may be a more general cell adhesion molecule involved in non-neuronal tissues and imaginal disk morphogenesis. The sequence is that of Neuroglian (Nrg) from Drosophila melanogaster (Fruit fly).